Reading from the N-terminus, the 293-residue chain is tRNA (guanine(9)-N1)-methyltransferase (293 aa).

The disordered stretch occupies residues 1 to 31; it reads MSNDEINQNEEKVKRTPPLPPVPEGMSKKQW. The residue at position 16 (Thr-16) is a Phosphothreonine. Residues 32–61 adopt a coiled-coil conformation; it reads KKMCKRQRWEENKAKYNAERRVKKKRLRHE. The SAM-dependent MTase TRM10-type domain occupies 83 to 279; sequence EPRINVNQTD…SVLPPRKLDA (197 aa). Residues 186–187, Gly-206, 210–214, Cys-218, Leu-232, and 244–246 contribute to the S-adenosyl-L-methionine site; these read LT, DKNRY, and RVL. Catalysis depends on Asp-210, which acts as the Proton acceptor. A Phosphoserine modification is found at Ser-283.

This sequence belongs to the class IV-like SAM-binding methyltransferase superfamily. TRM10 family. In terms of assembly, monomer.

Its subcellular location is the cytoplasm. It localises to the nucleus. It catalyses the reaction guanosine(9) in tRNA + S-adenosyl-L-methionine = N(1)-methylguanosine(9) in tRNA + S-adenosyl-L-homocysteine + H(+). In terms of biological role, S-adenosyl-L-methionine-dependent guanine N(1)-methyltransferase that catalyzes the formation of N(1)-methylguanine at position 9 (m1G9) in cytoplasmic tRNAs. This Saccharomyces cerevisiae (strain ATCC 204508 / S288c) (Baker's yeast) protein is tRNA (guanine(9)-N1)-methyltransferase.